Here is a 529-residue protein sequence, read N- to C-terminus: UDP-glucuronosyltransferase 2B9 (529 aa).

Positions methionine 1–glycine 21 are cleaved as a signal peptide. N-linked (GlcNAc...) asparagine glycans are attached at residues asparagine 67, asparagine 68, and asparagine 88. A helical membrane pass occupies residues isoleucine 494 to phenylalanine 514.

This sequence belongs to the UDP-glycosyltransferase family.

It is found in the microsome membrane. Its subcellular location is the endoplasmic reticulum membrane. It carries out the reaction glucuronate acceptor + UDP-alpha-D-glucuronate = acceptor beta-D-glucuronoside + UDP + H(+). UDPGT is of major importance in the conjugation and subsequent elimination of potentially toxic xenobiotics and endogenous compounds. This isozyme is active on C18, C19, and C21 steroids, bile acids, and several xenobiotics including eugenol, 1-naphthol, and p-nitrophenol. This is UDP-glucuronosyltransferase 2B9 (UGT2B9) from Macaca fascicularis (Crab-eating macaque).